The chain runs to 246 residues: MLLIPAIDLKDGHCVRLKQGDMDQSTIFSEDPAAMARSWVDKGARRLHLVDLNGAFAGKPKNEAAIKKILAEVGSEIDVQLGGGIRDLDTIERYLDAGLRYVIIGTAAVKNPGFLQDACTAFGGHIIVGLDAKDGKVATDGWSKLTGHEVIDLGKKFQDYGVESIIYTDIGRDGMLSGINIEATVRLAQALTIPVIASGGLSNMADIEALCDVEEEGVEGVICGRSIYSGDLDFAAAQARADELNG.

The active-site Proton acceptor is the Asp8. The active-site Proton donor is the Asp131.

This sequence belongs to the HisA/HisF family.

Its subcellular location is the cytoplasm. It catalyses the reaction 1-(5-phospho-beta-D-ribosyl)-5-[(5-phospho-beta-D-ribosylamino)methylideneamino]imidazole-4-carboxamide = 5-[(5-phospho-1-deoxy-D-ribulos-1-ylimino)methylamino]-1-(5-phospho-beta-D-ribosyl)imidazole-4-carboxamide. It functions in the pathway amino-acid biosynthesis; L-histidine biosynthesis; L-histidine from 5-phospho-alpha-D-ribose 1-diphosphate: step 4/9. This chain is 1-(5-phosphoribosyl)-5-[(5-phosphoribosylamino)methylideneamino] imidazole-4-carboxamide isomerase, found in Polaromonas sp. (strain JS666 / ATCC BAA-500).